The primary structure comprises 193 residues: Sarcoplasmic calcium-binding protein (193 aa).

EF-hand domains follow at residues 16–40 (MYDIDNNGYLDKNDFECLALRNTLI), 57–92 (IMSNLWNEIAELADFNKDGQVTVDEFKQAVQNLCCG), and 101–136 (CFKTVIGRLFKTIDINGDGLAGVDEYRLDCISRSAF). Positions 18, 20, 22, 24, 29, 70, 72, 74, 76, 81, 114, 116, 118, and 125 each coordinate Ca(2+).

In terms of assembly, monomer and dimer. In terms of tissue distribution, skeletal muscle (at protein level).

In terms of biological role, like parvalbumins, SCPs seem to be more abundant in fast contracting muscles, but no functional relationship can be established from this distribution. The protein is Sarcoplasmic calcium-binding protein of Scylla paramamosain (Mud crab).